Here is a 716-residue protein sequence, read N- to C-terminus: Beta-galactosidase (716 aa).

The Proton donor role is filled by Glu-389. Catalysis depends on Glu-462, which acts as the Nucleophile.

Belongs to the glycosyl hydrolase 2 family. As to quaternary structure, homodimer.

The catalysed reaction is Hydrolysis of terminal non-reducing beta-D-galactose residues in beta-D-galactosides.. Its function is as follows. Displays beta-galactosidase activity with the artificial chromogenic substrate o-nitrophenyl-beta-D-galactopyranoside (ONPG). This Thermoanaerobacterium thermosulfurigenes (Clostridium thermosulfurogenes) protein is Beta-galactosidase.